We begin with the raw amino-acid sequence, 60 residues long: Large ribosomal subunit protein bL32 (60 aa).

Residues 1-16 (MAVPKRKTTPSKRGMR) are compositionally biased toward basic residues. Positions 1–60 (MAVPKRKTTPSKRGMRRSADALKQPAYVENPDSGELHRPHHVDLKSGMYRGKQILKPKGE) are disordered. The span at 34–44 (GELHRPHHVDL) shows a compositional bias: basic and acidic residues.

This sequence belongs to the bacterial ribosomal protein bL32 family.

The chain is Large ribosomal subunit protein bL32 from Parvibaculum lavamentivorans (strain DS-1 / DSM 13023 / NCIMB 13966).